The chain runs to 315 residues: Calumenin (315 aa).

Positions M1–S19 are cleaved as a signal peptide. At Y47 the chain carries Phosphotyrosine. Position 65 is a phosphothreonine (T65). 6 EF-hand domains span residues E68–K103, Y104–D139, P151–D186, M188–N223, W229–D264, and H265–S300. The residue at position 69 (S69) is a Phosphoserine. Residues D81, D83, D85, E92, D117, N119, D121, and E128 each contribute to the Ca(2+) site. N-linked (GlcNAc...) asparagine glycosylation occurs at N131. D164, D166, D168, E175, D201, N203, D205, E212, D242, N244, D246, K248, and E253 together coordinate Ca(2+). Position 254 is a phosphothreonine (T254). S261 and S277 each carry phosphoserine. Residues D278, D280, D282, K284, and E289 each coordinate Ca(2+). Residues H312–F315 carry the Prevents secretion from ER motif.

The protein belongs to the CREC family. As to quaternary structure, binds crotoxin. Interacts with GGCX.

The protein resides in the endoplasmic reticulum membrane. It localises to the golgi apparatus. Its subcellular location is the secreted. It is found in the melanosome. The protein localises to the sarcoplasmic reticulum lumen. In terms of biological role, involved in regulation of vitamin K-dependent carboxylation of multiple N-terminal glutamate residues. Seems to inhibit gamma-carboxylase GGCX. Binds 7 calcium ions with a low affinity. In Rattus norvegicus (Rat), this protein is Calumenin (Calu).